The following is a 767-amino-acid chain: Ribonucleoside-diphosphate reductase subunit alpha (767 aa).

Residues 1–30 (MHPTLISAPISSSANDAHAGTSQGSHQGHR) are disordered. Residues 9 to 26 (PISSSANDAHAGTSQGSH) show a composition bias toward polar residues. Positions 31–120 (IQVIRRDGSS…VWSLWKDTLV (90 aa)) constitute an ATP-cone domain. Residues Thr-228, 243 to 244 (SC), Gly-272, 460 to 464 (NLCCE), and 631 to 635 (PNTSS) each bind substrate. Cys-244 and Cys-478 are joined by a disulfide. The active-site Proton acceptor is Asn-460. Cys-462 acts as the Cysteine radical intermediate in catalysis. Residue Glu-464 is the Proton acceptor of the active site.

It belongs to the ribonucleoside diphosphate reductase large chain family. As to quaternary structure, tetramer of two alpha and two beta subunits.

The enzyme catalyses a 2'-deoxyribonucleoside 5'-diphosphate + [thioredoxin]-disulfide + H2O = a ribonucleoside 5'-diphosphate + [thioredoxin]-dithiol. With respect to regulation, under complex allosteric control mediated by deoxynucleoside triphosphates and ATP binding. The type of nucleotide bound at the specificity site determines substrate preference. It seems probable that ATP makes the enzyme reduce CDP and UDP, dGTP favors ADP reduction and dTTP favors GDP reduction. In terms of biological role, provides the precursors necessary for DNA synthesis. Catalyzes the biosynthesis of deoxyribonucleotides from the corresponding ribonucleotides. The sequence is that of Ribonucleoside-diphosphate reductase subunit alpha (nrdA) from Synechocystis sp. (strain ATCC 27184 / PCC 6803 / Kazusa).